A 509-amino-acid chain; its full sequence is Maturase K (509 aa).

It belongs to the intron maturase 2 family. MatK subfamily.

It localises to the plastid. In terms of biological role, usually encoded in the trnK tRNA gene intron. Probably assists in splicing its own and other chloroplast group II introns. The chain is Maturase K from Castilleja linariifolia (Wyoming Indian paintbrush).